Here is a 1466-residue protein sequence, read N- to C-terminus: ABC transporter G family member 10 (1466 aa).

The span at 23 to 45 (NTPQYENNNNNNNNTSGNESPNI) shows a compositional bias: low complexity. Residues 23 to 47 (NTPQYENNNNNNNNTSGNESPNILN) are disordered. The ABC transporter 1 domain maps to 138–392 (VTIFNLFRPS…FLDLGFDCEP (255 aa)). In terms of domain architecture, ABC transmembrane type-2 1 spans 497–724 (WGDRFALISK…NGSTMSYQDQ (228 aa)). A run of 6 helical transmembrane segments spans residues 501-521 (FALISKYISIIVQTFVYASLF), 537-557 (AIYAAILFNAFVSAGELGLTF), 586-606 (IPLTAIQVTIFSVIVYFMYGL), 611-631 (GKFFIFLFTIFGSTLSMVAFF), 641-661 (LYVSQNILNVFILFMFTYGGY), and 767-787 (IITFLWWIFFVIINMIALELF). An ABC transporter 2 domain is found at 838-1082 (FTWNHIHYTV…LTSYFERNGV (245 aa)). Residue 874–881 (GSSGAGKT) coordinates ATP. Residues 1177-1399 (SYVYGIFTQA…LTCKEYFKPT (223 aa)) enclose the ABC transmembrane type-2 2 domain. The next 6 membrane-spanning stretches (helical) occupy residues 1178 to 1198 (YVYGIFTQAAASGLIIGFTFW), 1214 to 1234 (IFEILFLGILYIFIAIPQFLI), 1253 to 1273 (FAISIVIVELPFVAVAGTICF), 1290 to 1310 (FYFYITFILFLFICVSLGQVV), 1319 to 1339 (LAQTILPLLLVMLFLFCGVLV), and 1440 to 1460 (YGILWAFFIFNIIMVVSFVYL).

Belongs to the ABC transporter superfamily. ABCG family. PDR (TC 3.A.1.205) subfamily.

The protein resides in the membrane. In Dictyostelium discoideum (Social amoeba), this protein is ABC transporter G family member 10 (abcG10).